The chain runs to 593 residues: DNA primase (593 aa).

The segment at 38–62 (CPFHQEKTPSFTVSDSKRFFYCFGC) adopts a CHC2-type zinc-finger fold. The 83-residue stretch at 250 to 332 (NRSILVEGYF…EKKISFIRLP (83 aa)) folds into the Toprim domain. Mg(2+) is bound by residues glutamate 256, aspartate 300, and aspartate 302.

It belongs to the DnaG primase family. In terms of assembly, monomer. Interacts with DnaB. Zn(2+) serves as cofactor. Requires Mg(2+) as cofactor.

It catalyses the reaction ssDNA + n NTP = ssDNA/pppN(pN)n-1 hybrid + (n-1) diphosphate.. RNA polymerase that catalyzes the synthesis of short RNA molecules used as primers for DNA polymerase during DNA replication. This Rickettsia prowazekii (strain Madrid E) protein is DNA primase.